Here is a 303-residue protein sequence, read N- to C-terminus: Glutathione transport system permease protein GsiD (303 aa).

6 helical membrane passes run 40–60, 105–125, 144–164, 165–185, 222–242, and 266–286; these read AMTA…ARWI, LAAG…LGLL, LFAF…GSGI, ANVI…LVRG, IVVF…SLSF, and VIAP…VLAF. In terms of domain architecture, ABC transmembrane type-1 spans 101 to 290; it reads AQISLAAGVF…LTVLAFNLLG (190 aa).

Belongs to the binding-protein-dependent transport system permease family. In terms of assembly, the complex is composed of two ATP-binding proteins (GsiA), two transmembrane proteins (GsiC and GsiD) and a solute-binding protein (GsiB).

The protein resides in the cell inner membrane. In terms of biological role, part of the ABC transporter complex GsiABCD involved in glutathione import. Probably responsible for the translocation of the substrate across the membrane. This is Glutathione transport system permease protein GsiD from Escherichia coli O6:K15:H31 (strain 536 / UPEC).